The chain runs to 400 residues: MEPHFFFTVLWMLLMGTSSTYAQEIFGYCRTPDENSGTCINLRECGYLFELLQSEEVTEQDRRFLQASQCGYRNGQVLEKHFCFTNVQICCANSRMRNQQPQWGNHPQPTQTTKPTKRSGTKLLPMAPNCGENFGDRVVGGNETTKREFPWMALIEYTKPGNVKGHHCGGSLINHRYVLTAAHCVSAIPSDWELTGVRLGEWDASTNPDCTVGKNGRRDCNEPYVDYPVEERIPHPQYPGNSRDQLNDIALLRLRDEVQYSDFILPVCLPTLASQHNNIFLGRKVVVAGWGRTETNFTSNIKLKAELDTVPTSECNQRYATQRRTVTTKQMCAGGVEGVDSCRGDSGGPLLLEDYSNGNSNYYIAGVVSYGPTPCGLKGWPGVYTRVEAYLNWIENNVRA.

Positions M1 to A22 are cleaved as a signal peptide. The propeptide at Q23 to R137 is activation peptide. One can recognise a Clip domain in the interval Y28–C91. Cystine bridges form between C29-C90, C39-C70, and C45-C91. The interval N98 to G120 is disordered. 3 disulfide bridges follow: C130-C268, C168-C184, and C210-C220. The region spanning V138–R399 is the Peptidase S1 domain. N142 carries an N-linked (GlcNAc...) asparagine glycan. H183 functions as the Charge relay system in the catalytic mechanism. The Ca(2+) site is built by E201, D203, T206, and D209. The active-site Charge relay system is D248. N-linked (GlcNAc...) asparagine glycosylation is present at N296. Cystine bridges form between C315–C332 and C342–C375. S346 acts as the Charge relay system in catalysis.

Belongs to the peptidase S1 family. CLIP subfamily.

Its function is as follows. Serine protease which plays an essential role in the melanization immune response by acting downstream of sp7 to activate prophenoloxidase (PPO1). May function in diverse Hayan-dependent PPO1-activating cascades that are negatively controlled by different serpin proteins; Spn27A in the hemolymph and Spn77BA in the trachea. Regulation of melanization and PPO1 activation appears to be largely independent of the Toll signaling pathway. The polypeptide is Melanization protease 1 (Drosophila melanogaster (Fruit fly)).